The chain runs to 203 residues: Probable flagellin 1 (203 aa).

A propeptide spanning residues 1–11 (MGMRFLKNEKG) is cleaved from the precursor.

The protein belongs to the archaeal flagellin family.

It localises to the archaeal flagellum. Functionally, flagellin is the subunit protein which polymerizes to form the filaments of archaeal flagella. The sequence is that of Probable flagellin 1 (flaB1) from Archaeoglobus fulgidus (strain ATCC 49558 / DSM 4304 / JCM 9628 / NBRC 100126 / VC-16).